The primary structure comprises 154 residues: Endoribonuclease YbeY (154 aa).

H116, H120, and H126 together coordinate Zn(2+).

It belongs to the endoribonuclease YbeY family. Zn(2+) serves as cofactor.

The protein localises to the cytoplasm. Its function is as follows. Single strand-specific metallo-endoribonuclease involved in late-stage 70S ribosome quality control and in maturation of the 3' terminus of the 16S rRNA. This Chromohalobacter salexigens (strain ATCC BAA-138 / DSM 3043 / CIP 106854 / NCIMB 13768 / 1H11) protein is Endoribonuclease YbeY.